Consider the following 329-residue polypeptide: Putative glycosyltransferase CsbB (329 aa).

2 consecutive transmembrane segments (helical) span residues 231–251 (CFYT…ATFV) and 264–284 (FTII…LGII).

The protein belongs to the glycosyltransferase 2 family. GtrB subfamily.

It is found in the cell membrane. This Bacillus subtilis (strain 168) protein is Putative glycosyltransferase CsbB (csbB).